We begin with the raw amino-acid sequence, 1377 residues long: Protein RhsA (1377 aa).

Repeat copies occupy residues Gly-330–Thr-352, Gly-353–Ala-374, Gly-375–Asp-417, Gly-418–Ala-438, Gly-439–Asp-460, Gly-461–Asp-481, Gly-482–Asp-502, Gly-503–Thr-525, Gly-526–Ser-546, Gly-547–Glu-567, Gly-568–Gln-588, Gly-589–Asp-609, Gly-610–Gly-629, Gly-630–Asn-650, Gly-651–Asp-671, Gly-672–Glu-691, Gly-692–Lys-711, Gly-712–Glu-734, Gly-735–His-758, Gly-808–Phe-828, Gly-829–Ser-850, Leu-851–Pro-871, Arg-872–Asn-894, Leu-895–Ala-930, Arg-931–Thr-959, Asp-960–Glu-984, Glu-985–Ser-1019, and Gly-1162–Gln-1186. The interval Gly-330–Gln-1186 is 28 X approximate tandem repeats. Residues Asp-1356 to Arg-1377 form a disordered region.

Belongs to the RHS family.

Rhs elements have a nonessential function. They may play an important role in the natural ecology of the cell. The polypeptide is Protein RhsA (rhsA) (Escherichia coli (strain K12)).